The sequence spans 610 residues: tRNA uridine 5-carboxymethylaminomethyl modification enzyme MnmG (610 aa).

14–19 lines the FAD pocket; sequence GAGHAG. Residue 274–288 coordinates NAD(+); the sequence is GPRYCPSIEDKIVKF.

It belongs to the MnmG family. Homodimer. Heterotetramer of two MnmE and two MnmG subunits. FAD serves as cofactor.

Its subcellular location is the cytoplasm. Its function is as follows. NAD-binding protein involved in the addition of a carboxymethylaminomethyl (cmnm) group at the wobble position (U34) of certain tRNAs, forming tRNA-cmnm(5)s(2)U34. The polypeptide is tRNA uridine 5-carboxymethylaminomethyl modification enzyme MnmG (Chlamydia trachomatis serovar A (strain ATCC VR-571B / DSM 19440 / HAR-13)).